A 644-amino-acid chain; its full sequence is Translation factor GUF1, mitochondrial (644 aa).

The N-terminal 14 residues, 1–14 (MLRKAFRYLVPVRC), are a transit peptide targeting the mitochondrion. A tr-type G domain is found at 46–227 (ERYRNFSIVA…AIVDRIPPPT (182 aa)). GTP-binding positions include 55 to 62 (AHVDHGKS), 120 to 124 (DTPGH), and 174 to 177 (NKID).

The protein belongs to the TRAFAC class translation factor GTPase superfamily. Classic translation factor GTPase family. LepA subfamily.

It localises to the mitochondrion inner membrane. It carries out the reaction GTP + H2O = GDP + phosphate + H(+). Functionally, promotes mitochondrial protein synthesis. May act as a fidelity factor of the translation reaction, by catalyzing a one-codon backward translocation of tRNAs on improperly translocated ribosomes. Binds to mitochondrial ribosomes in a GTP-dependent manner. This is Translation factor GUF1, mitochondrial from Eremothecium gossypii (strain ATCC 10895 / CBS 109.51 / FGSC 9923 / NRRL Y-1056) (Yeast).